We begin with the raw amino-acid sequence, 444 residues long: Vacuolar protein sorting-associated protein 4B (444 aa).

The region spanning 4 to 82 is the MIT domain; that stretch reads TSPNLQKAID…KEYLKNKEKK (79 aa). A coiled-coil region spans residues 19–82; that stretch reads AQEDKAGNYE…KEYLKNKEKK (64 aa). Residues 78-88 show a composition bias toward basic and acidic residues; the sequence is NKEKKAQKPVK. Residues 78 to 117 are disordered; it reads NKEKKAQKPVKEGQPSPADEKGNDSDGEGESDDPEKKKLQ. Phosphoserine is present on residues Ser-93, Ser-102, and Ser-108. 174–181 is an ATP binding site; sequence GPPGTGKS. Ser-410 is subject to Phosphoserine.

Belongs to the AAA ATPase family. Proposed to be monomeric or homodimeric in nucleotide-free form and to oligomerize upon binding to ATP to form two stacked hexameric or heptameric rings with a central pore through which ESCRT-III substrates are translocated in an ATP-dependent manner. In vitro, associates on the inside of a helical tubular structure formed by a CHMP2A-CHMP3 polymer. Interacts with CHMP1A, CHMP1B, CHMP2A, CHMP4B and CHMP6. Interacts with VPS4A; the interaction suggests a heteromeric assembly with VPS4A. Interacts with VTA1.

The protein resides in the late endosome membrane. The catalysed reaction is ATP + H2O = ADP + phosphate + H(+). In terms of biological role, involved in late steps of the endosomal multivesicular bodies (MVB) pathway. Recognizes membrane-associated ESCRT-III assemblies and catalyzes their disassembly, possibly in combination with membrane fission. Redistributes the ESCRT-III components to the cytoplasm for further rounds of MVB sorting. MVBs contain intraluminal vesicles (ILVs) that are generated by invagination and scission from the limiting membrane of the endosome and mostly are delivered to lysosomes enabling degradation of membrane proteins, such as stimulated growth factor receptors, lysosomal enzymes and lipids. VPS4A/B are required for the exosomal release of SDCBP, CD63 and syndecan. Its function is as follows. (Microbial infection) In conjunction with the ESCRT machinery also appears to function in topologically equivalent membrane fission events, such as the terminal stages of cytokinesis and enveloped virus budding (lentiviruses). The chain is Vacuolar protein sorting-associated protein 4B (VPS4B) from Pongo abelii (Sumatran orangutan).